A 190-amino-acid chain; its full sequence is DNA-invertase hin (190 aa).

Residues 2–135 (ATIGYIRVST…AGLAAARAQG (134 aa)) enclose the Resolvase/invertase-type recombinase catalytic domain. Residue serine 10 is the O-(5'-phospho-DNA)-serine intermediate of the active site. Residues 162 to 181 (RQQLAIIFGIGVSTLYRYFP) constitute a DNA-binding region (H-T-H motif).

The protein belongs to the site-specific recombinase resolvase family.

Functionally, a DNA fragment of approximately 900 base pairs, adjacent to the fljB (H2) gene, which specifies the synthesis of phase-2 flagellin, can exist in either orientation with respect to fljB. The orientation of the inversion region controls expression of fljB. The hin gene occupies about two-thirds of the inversion region; it is required for the inversion of the fljB controlling region. This is DNA-invertase hin (hin) from Salmonella typhimurium (strain LT2 / SGSC1412 / ATCC 700720).